The sequence spans 544 residues: DNA mismatch repair protein MutL (544 aa).

It belongs to the DNA mismatch repair MutL/HexB family.

This protein is involved in the repair of mismatches in DNA. It is required for dam-dependent methyl-directed DNA mismatch repair. May act as a 'molecular matchmaker', a protein that promotes the formation of a stable complex between two or more DNA-binding proteins in an ATP-dependent manner without itself being part of a final effector complex. This Thermodesulfovibrio yellowstonii (strain ATCC 51303 / DSM 11347 / YP87) protein is DNA mismatch repair protein MutL.